The sequence spans 359 residues: Protein mab-21-like 2 (359 aa).

It belongs to the mab-21 family. Expressed in the adult cerebellum and eye, with lower levels in the adult forebrain. In embryos at 10.5 days post-coitum strongly expressed in the rostral and distal regions of the developing neural retina, with no expression immediately adjacent to the closing optic fissure. Expression is also observed in the dorsal and ventral aspects of the developing forelimb bud and in the developing pharyngeal arches, as well as in the midbrain.

Its subcellular location is the nucleus. It localises to the cytoplasm. In terms of biological role, required for several aspects of embryonic development including normal development of the eye, notochord, neural tube and other organ tissues, and for embryonic turning. In Mus musculus (Mouse), this protein is Protein mab-21-like 2 (Mab21l2).